We begin with the raw amino-acid sequence, 123 residues long: Large ribosomal subunit protein uL22 (123 aa).

This sequence belongs to the universal ribosomal protein uL22 family. Part of the 50S ribosomal subunit.

In terms of biological role, this protein binds specifically to 23S rRNA; its binding is stimulated by other ribosomal proteins, e.g. L4, L17, and L20. It is important during the early stages of 50S assembly. It makes multiple contacts with different domains of the 23S rRNA in the assembled 50S subunit and ribosome. Functionally, the globular domain of the protein is located near the polypeptide exit tunnel on the outside of the subunit, while an extended beta-hairpin is found that lines the wall of the exit tunnel in the center of the 70S ribosome. This chain is Large ribosomal subunit protein uL22, found in Synechococcus sp. (strain JA-3-3Ab) (Cyanobacteria bacterium Yellowstone A-Prime).